The sequence spans 217 residues: Peptide methionine sulfoxide reductase MsrA (217 aa).

The segment at 16 to 39 is disordered; that stretch reads EALKGGRHPVLESPQPHTVLGTPI. Residue cysteine 56 is part of the active site.

The protein belongs to the MsrA Met sulfoxide reductase family.

It catalyses the reaction L-methionyl-[protein] + [thioredoxin]-disulfide + H2O = L-methionyl-(S)-S-oxide-[protein] + [thioredoxin]-dithiol. It carries out the reaction [thioredoxin]-disulfide + L-methionine + H2O = L-methionine (S)-S-oxide + [thioredoxin]-dithiol. Functionally, has an important function as a repair enzyme for proteins that have been inactivated by oxidation. Catalyzes the reversible oxidation-reduction of methionine sulfoxide in proteins to methionine. This Corynebacterium efficiens (strain DSM 44549 / YS-314 / AJ 12310 / JCM 11189 / NBRC 100395) protein is Peptide methionine sulfoxide reductase MsrA.